The primary structure comprises 260 residues: Snake venom serine protease pallabin-2 (260 aa).

The signal sequence occupies residues 1-18 (MVLIKVLANLLILQLSYA). Residues 19–24 (QKSSEL) constitute a propeptide that is removed on maturation. The Peptidase S1 domain occupies 25-251 (IIGGDECNIN…HLDWIENIIA (227 aa)). 6 disulfide bridges follow: Cys-31–Cys-163, Cys-50–Cys-66, Cys-98–Cys-258, Cys-142–Cys-212, Cys-174–Cys-191, and Cys-202–Cys-227. The active-site Charge relay system is the His-65. Residue Asn-103 is glycosylated (N-linked (GlcNAc...) asparagine). The active-site Charge relay system is the Asp-110. The active-site Charge relay system is the Ser-206.

This sequence belongs to the peptidase S1 family. Snake venom subfamily. As to quaternary structure, monomer. Expressed by the venom gland.

The protein localises to the secreted. Snake venom serine protease that may act in the hemostasis system of the prey. The protein is Snake venom serine protease pallabin-2 (JZTHR7) of Gloydius halys (Chinese water mocassin).